Here is a 485-residue protein sequence, read N- to C-terminus: Glutamyl-tRNA(Gln) amidotransferase subunit A (485 aa).

Active-site charge relay system residues include K79 and S154. S178 functions as the Acyl-ester intermediate in the catalytic mechanism.

This sequence belongs to the amidase family. GatA subfamily. As to quaternary structure, heterotrimer of A, B and C subunits.

The enzyme catalyses L-glutamyl-tRNA(Gln) + L-glutamine + ATP + H2O = L-glutaminyl-tRNA(Gln) + L-glutamate + ADP + phosphate + H(+). Functionally, allows the formation of correctly charged Gln-tRNA(Gln) through the transamidation of misacylated Glu-tRNA(Gln) in organisms which lack glutaminyl-tRNA synthetase. The reaction takes place in the presence of glutamine and ATP through an activated gamma-phospho-Glu-tRNA(Gln). This chain is Glutamyl-tRNA(Gln) amidotransferase subunit A, found in Sulfurihydrogenibium sp. (strain YO3AOP1).